A 448-amino-acid chain; its full sequence is UDP-glucose 6-dehydrogenase (448 aa).

Residues 2–19 (NITF…GIIM), Val-11, Asp-30, Lys-35, Thr-121, and Glu-152 contribute to the NAD(+) site. Residues 148–152 (EFLRE), Lys-204, Asn-208, 249–253 (FLNAG), and Gly-257 contribute to the substrate site. Cys-260 functions as the Nucleophile in the catalytic mechanism. Lys-263 serves as a coordination point for NAD(+). Position 321 (Lys-321) interacts with substrate. NAD(+) is bound at residue Arg-328.

It belongs to the UDP-glucose/GDP-mannose dehydrogenase family.

The enzyme catalyses UDP-alpha-D-glucose + 2 NAD(+) + H2O = UDP-alpha-D-glucuronate + 2 NADH + 3 H(+). It functions in the pathway nucleotide-sugar biosynthesis; UDP-alpha-D-glucuronate biosynthesis; UDP-alpha-D-glucuronate from UDP-alpha-D-glucose: step 1/1. The chain is UDP-glucose 6-dehydrogenase (udg) from Rickettsia felis (strain ATCC VR-1525 / URRWXCal2) (Rickettsia azadi).